Here is a 31-residue protein sequence, read N- to C-terminus: Photosystem II reaction center protein T (31 aa).

Residues 3–23 (SLVYIFVFVVALGVLFFAIAF) form a helical membrane-spanning segment.

The protein belongs to the PsbT family. As to quaternary structure, PSII is composed of 1 copy each of membrane proteins PsbA, PsbB, PsbC, PsbD, PsbE, PsbF, PsbH, PsbI, PsbJ, PsbK, PsbL, PsbM, PsbT, PsbX, PsbY, PsbZ, Psb30/Ycf12, peripheral proteins PsbO, CyanoQ (PsbQ), PsbU, PsbV and a large number of cofactors. It forms dimeric complexes.

It localises to the cellular thylakoid membrane. In terms of biological role, found at the monomer-monomer interface of the photosystem II (PS II) dimer, plays a role in assembly and dimerization of PSII. PSII is a light-driven water plastoquinone oxidoreductase, using light energy to abstract electrons from H(2)O, generating a proton gradient subsequently used for ATP formation. The polypeptide is Photosystem II reaction center protein T (Synechococcus elongatus (strain ATCC 33912 / PCC 7942 / FACHB-805) (Anacystis nidulans R2)).